Reading from the N-terminus, the 155-residue chain is Large ribosomal subunit protein eL24 (155 aa).

Basic and acidic residues predominate over residues 94-129; that stretch reads RSLKPEVRKAQRDEKKKADKEKKKADKAARKSEKAK. The disordered stretch occupies residues 94–155; it reads RSLKPEVRKA…AFQKVAATSR (62 aa).

This sequence belongs to the eukaryotic ribosomal protein eL24 family.

This is Large ribosomal subunit protein eL24 (RPL24) from Kluyveromyces lactis (strain ATCC 8585 / CBS 2359 / DSM 70799 / NBRC 1267 / NRRL Y-1140 / WM37) (Yeast).